The sequence spans 250 residues: Oil body-associated protein 2B (250 aa).

The disordered stretch occupies residues methionine 1–valine 29. Residues proline 8–alanine 18 are compositionally biased toward low complexity.

Belongs to the OBAP family.

The protein is Oil body-associated protein 2B of Zea mays (Maize).